The chain runs to 466 residues: Secreted RxLR effector protein 101 (466 aa).

Residues 1–21 form the signal peptide; that stretch reads MRGAYSVITALLVVASSQIAA. The RxLR-dEER motif lies at 48 to 63; sequence RYLRGSQHVHDSNEER. Disordered stretches follow at residues 99 to 127 and 384 to 405; these read KMPHAATAGKKVSRVTRTGKKMTSHGANA and RTFNGNTDTASLPSKRSKVRSS. Over residues 109-121 the composition is skewed to basic residues; the sequence is KVSRVTRTGKKMT. Over residues 385–395 the composition is skewed to polar residues; sequence TFNGNTDTASL.

It belongs to the RxLR effector family.

The protein localises to the secreted. It is found in the host nucleus. Secreted effector that partially suppresses the host cell death induced by cell death-inducing proteins. The polypeptide is Secreted RxLR effector protein 101 (Plasmopara viticola (Downy mildew of grapevine)).